Here is a 575-residue protein sequence, read N- to C-terminus: 2-isopropylmalate synthase (575 aa).

Residues 31–305 (PTWLSTDLRD…APGLDFSDIA (275 aa)) form the Pyruvate carboxyltransferase domain. Residues Asp-40, His-244, His-246, and Asn-280 each contribute to the Mg(2+) site. The segment at 437-575 (PVQASPDFSD…RFAGEEQGKG (139 aa)) is regulatory domain.

The protein belongs to the alpha-IPM synthase/homocitrate synthase family. LeuA type 2 subfamily. Homodimer. Requires Mg(2+) as cofactor.

The protein localises to the cytoplasm. It carries out the reaction 3-methyl-2-oxobutanoate + acetyl-CoA + H2O = (2S)-2-isopropylmalate + CoA + H(+). It participates in amino-acid biosynthesis; L-leucine biosynthesis; L-leucine from 3-methyl-2-oxobutanoate: step 1/4. Functionally, catalyzes the condensation of the acetyl group of acetyl-CoA with 3-methyl-2-oxobutanoate (2-ketoisovalerate) to form 3-carboxy-3-hydroxy-4-methylpentanoate (2-isopropylmalate). The protein is 2-isopropylmalate synthase of Herbaspirillum seropedicae (strain SmR1).